Consider the following 414-residue polypeptide: Putative competence-damage inducible protein (414 aa).

Belongs to the CinA family.

The polypeptide is Putative competence-damage inducible protein (Listeria monocytogenes serovar 1/2a (strain ATCC BAA-679 / EGD-e)).